The primary structure comprises 1416 residues: MEPMTPMRPIPGAYVNTPAPPTANPARRRLFTEASSSGAAATTQLGAAPAPLASTMAPGPEINSGLMTPQAREDLPPVAKAAQVVNQTLQLDDSYPDLDSYCRPGASSDYEMQSSDSSWAPFHVVRHHNIPDKVFEHLNAGEVFTKLGLFAEIGYAWASIDSSLFLWDYTHPNPELIGYEEATHTITAVALVPPKPGVFVKTITHVLVVATTSEIILLGVSATPTPSGSKSLTLYSTRMSVHRGGSDVSFIVGTKDGRIFLGGESDTDIHEIFYQQEERWFSSRCGKINHSHPGWSAVVPSLAGLPFGSRQQEWLRGLYVDDTRNLLYSLSNRSTIRTYHMEGPEKLTKVIEKDKTSCLRDFAHMADSSPLFTDKTNIVALSPIPATEASKLHLMALTDTGCRLFLSATSSASYTMGGATSLAPQSMQLQFVKFPPRESPTRIRTLNGQIIDSQLDKTSRALDPSALGFRFSPGYFFDVVRKHPNQDMLFVSAPDTGRIKVTQPASALKYFEQGTWIELENGNRTIEIGLTTAPFAAAKQPLGFGNELAVQFDQVPGEFAVLTNTGVHIVRRRRLVDIFAKALGNCVSASDDALEREVRKFINQYGRVETIAAALAVACGQGSDLRTGTGRGMDRNTENLARAAFIEYGGQPRLAESDGKQSVSESVRLSSRHDALALYLTRLVRTLWKAKVVQVGSGSDISSTIPTSKLVTIQENVERLRNFLEANKSTIQGLAPPSERLFGRQEDIANQKEHQALHALQKLMESISEGISFVLMLFDERVSDIYARLDAVSQQQLKDLTYEQLFSQTPGKELAKVLVKAIVNRNIASGANVETVADALRRRCGSFCSPDDVVTFKAQEQLQRASEQAHNSPVLRALLAESLRLFEQVAGSLTPANLTTAVEQYISLKYYAGAIQLCLTVAQQKDRGNTALSWVNDGKPANDSRKKAFDERKICYNLIHQVLDKLESDFAGEPELVDGRPTLAATKRMEAYNVVNDSSDEVFHFDLYEWYIEKGWTDRILSIDSPHVITYLQRLAETDFRHAELLCRFYTTRSRFFEAAQVQTNLAKSDLNISLKDRIILLSRAKGNASVNTIGISRQQQQQLNHEASELLEIAHIQDDLLERLVADPRIPEERKAEIEEFLDGPIRTLTDLFNDYADQANYYDLCLLIFHAADFHNPRTILDTWNNLINQSHFEAEQRREYWEIVQAGGDLPAGVIAPIAEPPLPYVYVSQQIQLIAHRTSLDSLIFPVNSLLPVVCAYAINNGQDASIGADPCWPIQLFLNLGVPHALVVQVLENVLDTQEAPFTGRRRKLVVQWIAMAVDMWVREVERRGAMAAAAASGASGSEAVMGSWVSELLGRADQVLTQIAGTGATLRGGAASDAEEIASLRRTVKGLKRSVDMLLGGEMARMSFFR.

2 disordered regions span residues 1–26 (MEPM…ANPA) and 50–69 (APLA…LMTP).

The protein belongs to the non-repetitive/WGA-negative nucleoporin family. Component of the nuclear pore complex (NPC). NPC constitutes the exclusive means of nucleocytoplasmic transport. NPCs allow the passive diffusion of ions and small molecules and the active, nuclear transport receptor-mediated bidirectional transport of macromolecules such as proteins, RNAs, ribonucleoparticles (RNPs), and ribosomal subunits across the nuclear envelope. Due to its 8-fold rotational symmetry, all subunits are present with 8 copies or multiples thereof. Part of a tetrameric NUP192-NUP170-NIC96-NUP53 or NUP188-NUP170-NIC96-NUP53 module.

It is found in the nucleus. Its subcellular location is the nuclear pore complex. The protein localises to the nucleus membrane. In terms of biological role, functions as a component of the nuclear pore complex (NPC). NPC components, collectively referred to as nucleoporins (NUPs), can play the role of both NPC structural components and of docking or interaction partners for transiently associated nuclear transport factors. NUP170 probably plays an important role in NPC assembly and organization. The sequence is that of Nucleoporin NUP170 (NUP170) from Chaetomium thermophilum (strain DSM 1495 / CBS 144.50 / IMI 039719) (Thermochaetoides thermophila).